Here is a 509-residue protein sequence, read N- to C-terminus: Bifunctional purine biosynthesis protein PurH (509 aa).

In terms of domain architecture, MGS-like spans 1 to 144 (MKRALISVSD…KNYAAVTVVV (144 aa)).

The protein belongs to the PurH family.

The enzyme catalyses (6R)-10-formyltetrahydrofolate + 5-amino-1-(5-phospho-beta-D-ribosyl)imidazole-4-carboxamide = 5-formamido-1-(5-phospho-D-ribosyl)imidazole-4-carboxamide + (6S)-5,6,7,8-tetrahydrofolate. It catalyses the reaction IMP + H2O = 5-formamido-1-(5-phospho-D-ribosyl)imidazole-4-carboxamide. It functions in the pathway purine metabolism; IMP biosynthesis via de novo pathway; 5-formamido-1-(5-phospho-D-ribosyl)imidazole-4-carboxamide from 5-amino-1-(5-phospho-D-ribosyl)imidazole-4-carboxamide (10-formyl THF route): step 1/1. The protein operates within purine metabolism; IMP biosynthesis via de novo pathway; IMP from 5-formamido-1-(5-phospho-D-ribosyl)imidazole-4-carboxamide: step 1/1. In Listeria monocytogenes serotype 4a (strain HCC23), this protein is Bifunctional purine biosynthesis protein PurH.